The following is a 22-amino-acid chain: Chymotrypsin inhibitor (22 aa).

Positions 1–22 are disordered; sequence FDESFGFQGPSTYEKTPLGEPA.

As to expression, hemolymph.

It localises to the secreted. It is found in the extracellular space. Functionally, inhibits chymotrypsin stoichiometrically. Also inhibits porcine pancreatic elastase and trypsin. The polypeptide is Chymotrypsin inhibitor (Mythimna unipuncta (Armyworm moth)).